The following is a 21-amino-acid chain: thr operon leader peptide (21 aa).

The protein belongs to the thr operon leader peptide family.

Functionally, this protein is involved in control of the biosynthesis of threonine. This Salmonella choleraesuis (strain SC-B67) protein is thr operon leader peptide.